Reading from the N-terminus, the 356-residue chain is Nicotinate-nucleotide--dimethylbenzimidazole phosphoribosyltransferase (356 aa).

Catalysis depends on Glu-317, which acts as the Proton acceptor.

This sequence belongs to the CobT family. Homodimer.

The catalysed reaction is 5,6-dimethylbenzimidazole + nicotinate beta-D-ribonucleotide = alpha-ribazole 5'-phosphate + nicotinate + H(+). It participates in nucleoside biosynthesis; alpha-ribazole biosynthesis; alpha-ribazole from 5,6-dimethylbenzimidazole: step 1/2. Functionally, catalyzes the synthesis of alpha-ribazole-5'-phosphate from nicotinate mononucleotide (NAMN) and 5,6-dimethylbenzimidazole (DMB). The chain is Nicotinate-nucleotide--dimethylbenzimidazole phosphoribosyltransferase from Salmonella paratyphi C (strain RKS4594).